The chain runs to 160 residues: MIIEHKMAKEKQETELEITNETDTTTELTVEKQGKELIAQTNLSSSNLIKEFEREQLKKQLPEIYVGDTVKVGVKITEGNKERVQPYEGVVIAKRHGGLHQTITVRRIFQGIGVERVFMLHSPQVASLKVERRGKVRRAKLFYLRDRVGKATRVKQRFDR.

Belongs to the bacterial ribosomal protein bL19 family.

Its function is as follows. This protein is located at the 30S-50S ribosomal subunit interface and may play a role in the structure and function of the aminoacyl-tRNA binding site. In Prochlorococcus marinus subsp. pastoris (strain CCMP1986 / NIES-2087 / MED4), this protein is Large ribosomal subunit protein bL19.